The following is a 225-amino-acid chain: UPF0758 protein XC_3944 (225 aa).

The MPN domain maps to Ala-102–Val-224. Residues His-173, His-175, and Asp-186 each coordinate Zn(2+). Positions His-173–Asp-186 match the JAMM motif motif.

The protein belongs to the UPF0758 family.

The chain is UPF0758 protein XC_3944 from Xanthomonas campestris pv. campestris (strain 8004).